Reading from the N-terminus, the 630-residue chain is A-type voltage-gated potassium channel KCND2 (630 aa).

Topologically, residues 1-184 (MAAGVAAWLP…FENPHTSTMA (184 aa)) are cytoplasmic. The interaction with KCNIP1, KCNIP2, and other family members stretch occupies residues 2–20 (AAGVAAWLPFARAAAIGWM). Thr-38 is subject to Phosphothreonine. The segment at 71-90 (ERDFFYHPETQQYFFDRDPD) is interaction with KCNIP1. The Zn(2+) site is built by His-105, Cys-111, Cys-132, and Cys-133. Residues 185–206 (LVFYYVTGFFIAVSVIANVVET) traverse the membrane as a helical segment. Topologically, residues 207–226 (VPCGSSPGHIKELPCGERYA) are extracellular. The helical transmembrane segment at 227–249 (VAFFCLDTACVMIFTVEYLLRLA) threads the bilayer. Residues 250–256 (AAPSRYR) lie on the Cytoplasmic side of the membrane. The helical transmembrane segment at 257-281 (FVRSVMSIIDVVAILPYYIGLVMTD) threads the bilayer. Over 282–287 (NEDVSG) the chain is Extracellular. A helical; Voltage-sensor membrane pass occupies residues 288-307 (AFVTLRVFRVFRIFKFSRHS). The Cytoplasmic segment spans residues 308 to 321 (QGLRILGYTLKSCA). Positions 308-321 (QGLRILGYTLKSCA) are S4-S5 linker. The helical transmembrane segment at 322–345 (SELGFLLFSLTMAIIIFATVMFYA) threads the bilayer. Topologically, residues 346–357 (EKGSSASKFTSI) are extracellular. Residues 358–369 (PAAFWYTIVTMT) constitute an intramembrane region (helical). Positions 370, 371, 372, and 373 each coordinate K(+). The Selectivity filter signature appears at 370–375 (TLGYGD). An intramembrane segment occupies 370 to 377 (TLGYGDMV). Residues 378-380 (PKT) are Extracellular-facing. Residues 381–403 (IAGKIFGSICSLSGVLVIALPVP) form a helical membrane-spanning segment. The Cytoplasmic portion of the chain corresponds to 404-630 (VIVSNFSRIY…GGNIVRVSAL (227 aa)). At Ser-438 the chain carries Phosphoserine. The segment at 474 to 489 (FETQHHHLLHCLEKTT) is required for dendritic targeting. The interval 474-630 (FETQHHHLLH…GGNIVRVSAL (157 aa)) is important for normal channel activation and inactivation, for interaction with KCNIP2, and probably other family members as well. Phosphoserine is present on residues Ser-548, Ser-552, Ser-572, and Ser-575. The segment at 600–623 (IPTPPVTTPEGDDRPESPEYSGGN) is disordered. Phosphothreonine occurs at positions 602 and 607. Ser-616 carries the post-translational modification Phosphoserine. The PDZ-binding motif lies at 627-630 (VSAL).

Belongs to the potassium channel family. D (Shal) (TC 1.A.1.2) subfamily. Kv4.2/KCND2 sub-subfamily. In terms of assembly, homotetramer or heterotetramer with KCND1 or KCND3. Associates with the regulatory subunits KCNIP1, KCNIP2, KCNIP3 and KCNIP4. Interacts with DPP6, DPP10, DLG4 and DLG1. In vivo, probably exists as heteromeric complex containing variable proportions of KCND1, KCND2, KCND3, KCNIP1, KCNIP2, KCNIP3, KCNIP4, DPP6 and DPP10. The tetrameric channel can associate with up to four regulatory subunits, such as KCNIP2 or KCNIP4. Interaction with KCNIP3 promotes tetramerization and formation of a functional potassium channel. Interaction with four KCNIP4 chains does not reduce interaction with DPP10. Probably part of a complex consisting of KCNIP1, KCNIP2 isoform 3 and KCND2. Interacts with FLNA and FLNC. Interacts with NCS1/FREQ. Identified in a complex with cAMP-dependent protein kinase (PKA), CAV3, AKAP6 and KCND3 in cardiac myocytes. Interacts (via S1 and S2 helices) with DPP6; this interaction stabilizes the conformation of the S1-S2 helices and facilitates S4 conformational change, including S4 sliding up and down, thereby accelerating activation, inactivation, and recovery. Phosphorylation at Ser-438 in response to MAPK activation is increased in stimulated dendrites. Interaction with KCNIP2 and DPP6 propomtes phosphorylation by PKA at Ser-552. Phosphorylation at Ser-552 has no effect on interaction with KCNIP3, but is required for the regulation of channel activity by KCNIP3. Phosphorylation at Ser-552 leads to KCND2 internalization. Phosphorylated by MAPK in response to signaling via the metabotropic glutamate receptor GRM5. Phosphorylation at Ser-616 is required for the down-regulation of neuronal A-type currents in response to signaling via GRM5. Detected in brain frontal cortex.

It localises to the cell membrane. The protein localises to the cell projection. The protein resides in the dendrite. Its subcellular location is the synapse. It is found in the perikaryon. It localises to the postsynaptic cell membrane. The protein localises to the dendritic spine. The protein resides in the sarcolemma. Its subcellular location is the cell junction. It is found in the membrane. It localises to the caveola. The enzyme catalyses K(+)(in) = K(+)(out). Voltage-gated potassium channel that mediates transmembrane potassium transport in excitable membranes, primarily in the brain. Mediates the major part of the dendritic A-type current I(SA) in brain neurons. This current is activated at membrane potentials that are below the threshold for action potentials. It regulates neuronal excitability, prolongs the latency before the first spike in a series of action potentials, regulates the frequency of repetitive action potential firing, shortens the duration of action potentials and regulates the back-propagation of action potentials from the neuronal cell body to the dendrites. Contributes to the regulation of the circadian rhythm of action potential firing in suprachiasmatic nucleus neurons, which regulates the circadian rhythm of locomotor activity. Functions downstream of the metabotropic glutamate receptor GRM5 and plays a role in neuronal excitability and in nociception mediated by activation of GRM5. Mediates the transient outward current I(to) in rodent heart left ventricle apex cells, but not in human heart, where this current is mediated by another family member. Forms tetrameric potassium-selective channels through which potassium ions pass in accordance with their electrochemical gradient. The channel alternates between opened and closed conformations in response to the voltage difference across the membrane. Can form functional homotetrameric channels and heterotetrameric channels that contain variable proportions of KCND2 and KCND3; channel properties depend on the type of pore-forming alpha subunits that are part of the channel. In vivo, membranes probably contain a mixture of heteromeric potassium channel complexes. Interaction with specific isoforms of the regulatory subunits KCNIP1, KCNIP2, KCNIP3 or KCNIP4 strongly increases expression at the cell surface and thereby increases channel activity; it modulates the kinetics of channel activation and inactivation, shifts the threshold for channel activation to more negative voltage values, shifts the threshold for inactivation to less negative voltages and accelerates recovery after inactivation. Likewise, interaction with DPP6 or DPP10 promotes expression at the cell membrane and regulates both channel characteristics and activity. Upon depolarization, the channel goes from a resting closed state (C state) to an activated but non-conducting state (C* state), from there, the channel may either inactivate (I state) or open (O state). This Oryctolagus cuniculus (Rabbit) protein is A-type voltage-gated potassium channel KCND2.